We begin with the raw amino-acid sequence, 255 residues long: uncharacterized protein (255 aa).

Residues His6, His8, Glu92, His128, His153, and Asp203 each contribute to the a divalent metal cation site.

The protein belongs to the metallo-dependent hydrolases superfamily. TatD-type hydrolase family. It depends on a divalent metal cation as a cofactor.

This is an uncharacterized protein from Bacillus subtilis (strain 168).